A 441-amino-acid polypeptide reads, in one-letter code: 3-phosphoshikimate 1-carboxyvinyltransferase (441 aa).

The 3-phosphoshikimate site is built by lysine 25, serine 26, and arginine 30. Lysine 25 lines the phosphoenolpyruvate pocket. Glycine 97 and arginine 125 together coordinate phosphoenolpyruvate. 3-phosphoshikimate is bound by residues serine 169, glutamine 170, aspartate 311, and lysine 338. Phosphoenolpyruvate is bound at residue glutamine 170. The Proton acceptor role is filled by aspartate 311. Arginine 342, arginine 383, and lysine 410 together coordinate phosphoenolpyruvate.

It belongs to the EPSP synthase family. Monomer.

It localises to the cytoplasm. It catalyses the reaction 3-phosphoshikimate + phosphoenolpyruvate = 5-O-(1-carboxyvinyl)-3-phosphoshikimate + phosphate. It participates in metabolic intermediate biosynthesis; chorismate biosynthesis; chorismate from D-erythrose 4-phosphate and phosphoenolpyruvate: step 6/7. Its function is as follows. Catalyzes the transfer of the enolpyruvyl moiety of phosphoenolpyruvate (PEP) to the 5-hydroxyl of shikimate-3-phosphate (S3P) to produce enolpyruvyl shikimate-3-phosphate and inorganic phosphate. The sequence is that of 3-phosphoshikimate 1-carboxyvinyltransferase from Chlamydia muridarum (strain MoPn / Nigg).